Here is a 250-residue protein sequence, read N- to C-terminus: Probable transcriptional regulatory protein MAP_1030 (250 aa).

It belongs to the TACO1 family.

It localises to the cytoplasm. This chain is Probable transcriptional regulatory protein MAP_1030, found in Mycolicibacterium paratuberculosis (strain ATCC BAA-968 / K-10) (Mycobacterium paratuberculosis).